A 215-amino-acid polypeptide reads, in one-letter code: Uracil phosphoribosyltransferase (215 aa).

Position 30–34 (30–34) interacts with GTP; the sequence is KGMVR. 5-phospho-alpha-D-ribose 1-diphosphate-binding positions include Arg-80, Arg-105, and 139 to 147; that span reads DPMIATAST. Uracil is bound by residues Ile-202 and 207-209; that span reads GDA. Residue Asp-208 coordinates 5-phospho-alpha-D-ribose 1-diphosphate.

The protein belongs to the UPRTase family. The cofactor is Mg(2+).

The enzyme catalyses UMP + diphosphate = 5-phospho-alpha-D-ribose 1-diphosphate + uracil. The protein operates within pyrimidine metabolism; UMP biosynthesis via salvage pathway; UMP from uracil: step 1/1. Allosterically activated by GTP. In terms of biological role, catalyzes the conversion of uracil and 5-phospho-alpha-D-ribose 1-diphosphate (PRPP) to UMP and diphosphate. This is Uracil phosphoribosyltransferase from Metallosphaera sedula (strain ATCC 51363 / DSM 5348 / JCM 9185 / NBRC 15509 / TH2).